The sequence spans 81 residues: Beta-catenin-interacting protein 1 (81 aa).

A Phosphoserine modification is found at S59.

It belongs to the CTNNBIP1 family. In terms of assembly, binds CTNNB1.

It is found in the cytoplasm. It localises to the nucleus. In terms of biological role, prevents the interaction between CTNNB1 and TCF family members, and acts as a negative regulator of the Wnt signaling pathway. In Homo sapiens (Human), this protein is Beta-catenin-interacting protein 1 (CTNNBIP1).